Here is a 156-residue protein sequence, read N- to C-terminus: Phospholipase A2 A2-hormotoxin-Apt1a (156 aa).

A signal peptide spans 1-19 (MQLYTYFFTFSLVLILALA). The propeptide occupies 20-35 (DQENKSLDFTQEGGIA). Disulfide bonds link cysteine 62/cysteine 156, cysteine 64/cysteine 80, cysteine 79/cysteine 138, cysteine 86/cysteine 131, and cysteine 115/cysteine 129. Positions 65 and 67 each coordinate Ca(2+). The active site involves histidine 83. Aspartate 84 contributes to the Ca(2+) binding site. Aspartate 132 is an active-site residue.

It belongs to the phospholipase A2 family. The cofactor is Ca(2+).

It localises to the secreted. The protein localises to the nematocyst. The enzyme catalyses a 1,2-diacyl-sn-glycero-3-phosphocholine + H2O = a 1-acyl-sn-glycero-3-phosphocholine + a fatty acid + H(+). Its function is as follows. Sea anemone phospholipase A2 (PLA2) that may have a role both in defense and in digestion, since its expression and enzymatic activity were found both in the acontia (defensive organs) and tentacles. PLA2 catalyzes the calcium-dependent hydrolysis of the 2-acyl groups in 3-sn-phosphoglycerides. In Adamsia palliata (Cloak anemone), this protein is Phospholipase A2 A2-hormotoxin-Apt1a.